The chain runs to 115 residues: Protein translation factor SUI1 homolog (115 aa).

The protein belongs to the SUI1 family.

Probably involved in translation. The protein is Protein translation factor SUI1 homolog of Sporobolus stapfianus (Ressurection grass).